Here is a 179-residue protein sequence, read N- to C-terminus: Protein GrpE (179 aa).

Over residues 1–14 the composition is skewed to basic and acidic residues; that stretch reads MSKKDKKEEIKEEV. The segment at 1–40 is disordered; it reads MSKKDKKEEIKEEVEATEPTTEESVEEVAEETSENKELQE. Over residues 15-32 the composition is skewed to acidic residues; that stretch reads EATEPTTEESVEEVAEET.

The protein belongs to the GrpE family. In terms of assembly, homodimer.

It localises to the cytoplasm. In terms of biological role, participates actively in the response to hyperosmotic and heat shock by preventing the aggregation of stress-denatured proteins, in association with DnaK and GrpE. It is the nucleotide exchange factor for DnaK and may function as a thermosensor. Unfolded proteins bind initially to DnaJ; upon interaction with the DnaJ-bound protein, DnaK hydrolyzes its bound ATP, resulting in the formation of a stable complex. GrpE releases ADP from DnaK; ATP binding to DnaK triggers the release of the substrate protein, thus completing the reaction cycle. Several rounds of ATP-dependent interactions between DnaJ, DnaK and GrpE are required for fully efficient folding. This chain is Protein GrpE, found in Streptococcus mutans serotype c (strain ATCC 700610 / UA159).